The sequence spans 267 residues: 4-hydroxy-tetrahydrodipicolinate reductase (267 aa).

NAD(+) is bound by residues 8-13 (GAGGRM) and glutamate 34. Residue arginine 35 participates in NADP(+) binding. NAD(+)-binding positions include 98-100 (GTT) and 122-125 (APNM). The Proton donor/acceptor role is filled by histidine 155. Histidine 156 provides a ligand contact to (S)-2,3,4,5-tetrahydrodipicolinate. Lysine 159 serves as the catalytic Proton donor. (S)-2,3,4,5-tetrahydrodipicolinate is bound at residue 165–166 (GT).

Belongs to the DapB family.

Its subcellular location is the cytoplasm. The catalysed reaction is (S)-2,3,4,5-tetrahydrodipicolinate + NAD(+) + H2O = (2S,4S)-4-hydroxy-2,3,4,5-tetrahydrodipicolinate + NADH + H(+). The enzyme catalyses (S)-2,3,4,5-tetrahydrodipicolinate + NADP(+) + H2O = (2S,4S)-4-hydroxy-2,3,4,5-tetrahydrodipicolinate + NADPH + H(+). It participates in amino-acid biosynthesis; L-lysine biosynthesis via DAP pathway; (S)-tetrahydrodipicolinate from L-aspartate: step 4/4. In terms of biological role, catalyzes the conversion of 4-hydroxy-tetrahydrodipicolinate (HTPA) to tetrahydrodipicolinate. This chain is 4-hydroxy-tetrahydrodipicolinate reductase, found in Thioalkalivibrio sulfidiphilus (strain HL-EbGR7).